A 56-amino-acid polypeptide reads, in one-letter code: Hydrophobic protein LTI6A (56 aa).

Transmembrane regions (helical) follow at residues 11 to 31 and 34 to 54; these read IILAIILPPLGVFFKFGCGIE and ICLLLTFFGYLPGIIYAVWVI.

This sequence belongs to the UPF0057 (PMP3) family. As to expression, expressed in shoot of cold stressed seedlings.

Its subcellular location is the membrane. Plays a role in the regulation of membrane potential. Could mediate a proton leak. This chain is Hydrophobic protein LTI6A (LTI6A), found in Oryza sativa subsp. japonica (Rice).